A 446-amino-acid chain; its full sequence is MTENKYLYVETFGCQMNVNDSEKIATLLKDEGYLPTDDPERADLVILNTCSVRAKAEQKVYGHLGRFKGVRSRKKGFLLGVGGCVAQQEGERLLQKVPWLDLVFGTHNLHLLPEIVRAAERGERRAEVGFIDNETRLDLFPETGGEGGVTRFVTVMQGCDNFCSYCIVPYVRGREISRRSSDIIDEVRKSVAEGVKEVTLLGQNVNSYGLKTEGELSFAGLIRRIAEVEGLERIRFTTSHPKDISPELIACFAEVPKLCGHIHLPAQSGSDAVLARMNRGYTRAGYLEKVEALRAARPGIQFTGDMIVGFPGETEEDFQATISLMEEVRYADLFSFIYSPRPETAAAGIRDTVSRKEKQSRLDRLQTLQQQMKRERNISFVGTRQLVLVEGVSKRGDQLYGRIDGNRIVNFAADQSLIGTMAEVTITQDYQNSLLGEIVTDKGDAR.

The MTTase N-terminal domain occupies 5-121 (KYLYVETFGC…LPEIVRAAER (117 aa)). Positions 14, 50, 84, 159, 163, and 166 each coordinate [4Fe-4S] cluster. In terms of domain architecture, Radical SAM core spans 145 to 375 (GEGGVTRFVT…QTLQQQMKRE (231 aa)). The 63-residue stretch at 378 to 440 (ISFVGTRQLV…QNSLLGEIVT (63 aa)) folds into the TRAM domain.

This sequence belongs to the methylthiotransferase family. MiaB subfamily. As to quaternary structure, monomer. The cofactor is [4Fe-4S] cluster.

It localises to the cytoplasm. It catalyses the reaction N(6)-dimethylallyladenosine(37) in tRNA + (sulfur carrier)-SH + AH2 + 2 S-adenosyl-L-methionine = 2-methylsulfanyl-N(6)-dimethylallyladenosine(37) in tRNA + (sulfur carrier)-H + 5'-deoxyadenosine + L-methionine + A + S-adenosyl-L-homocysteine + 2 H(+). Catalyzes the methylthiolation of N6-(dimethylallyl)adenosine (i(6)A), leading to the formation of 2-methylthio-N6-(dimethylallyl)adenosine (ms(2)i(6)A) at position 37 in tRNAs that read codons beginning with uridine. This is tRNA-2-methylthio-N(6)-dimethylallyladenosine synthase from Geobacter sulfurreducens (strain ATCC 51573 / DSM 12127 / PCA).